A 190-amino-acid polypeptide reads, in one-letter code: Heme-binding protein 1 (190 aa).

It belongs to the HEBP family. As to quaternary structure, monomer.

The protein resides in the cytoplasm. In terms of biological role, may bind free porphyrinogens that may be present in the cell and thus facilitate removal of these potentially toxic compound. Binds with a high affinity to one molecule of heme or porphyrins. It binds metalloporphyrins, free porphyrins and N-methylprotoporphyrin with similar affinities. This Xenopus laevis (African clawed frog) protein is Heme-binding protein 1 (hebp1).